The primary structure comprises 687 residues: Glycine--tRNA ligase beta subunit (687 aa).

Belongs to the class-II aminoacyl-tRNA synthetase family. As to quaternary structure, tetramer of two alpha and two beta subunits.

The protein resides in the cytoplasm. The catalysed reaction is tRNA(Gly) + glycine + ATP = glycyl-tRNA(Gly) + AMP + diphosphate. The polypeptide is Glycine--tRNA ligase beta subunit (Ruegeria sp. (strain TM1040) (Silicibacter sp.)).